The chain runs to 227 residues: Cytochrome c oxidase subunit 2 (227 aa).

Residues 1 to 14 (MAYPFQLGFQDATS) lie on the Mitochondrial intermembrane side of the membrane. A helical transmembrane segment spans residues 15-45 (PIMEELLHFHDHTLMIVFLISSLVLYIISSM). Residues 46–59 (LTTKLTHTSTMDAQ) lie on the Mitochondrial matrix side of the membrane. Residues 60–87 (EVETIWTILPAIILILIALPSLRILYMM) form a helical membrane-spanning segment. The Mitochondrial intermembrane portion of the chain corresponds to 88 to 227 (DEINNPSLTV…YFEEWSASML (140 aa)). Cu cation-binding residues include His-161, Cys-196, Glu-198, Cys-200, His-204, and Met-207. Glu-198 contacts Mg(2+).

It belongs to the cytochrome c oxidase subunit 2 family. In terms of assembly, component of the cytochrome c oxidase (complex IV, CIV), a multisubunit enzyme composed of 14 subunits. The complex is composed of a catalytic core of 3 subunits MT-CO1, MT-CO2 and MT-CO3, encoded in the mitochondrial DNA, and 11 supernumerary subunits COX4I, COX5A, COX5B, COX6A, COX6B, COX6C, COX7A, COX7B, COX7C, COX8 and NDUFA4, which are encoded in the nuclear genome. The complex exists as a monomer or a dimer and forms supercomplexes (SCs) in the inner mitochondrial membrane with NADH-ubiquinone oxidoreductase (complex I, CI) and ubiquinol-cytochrome c oxidoreductase (cytochrome b-c1 complex, complex III, CIII), resulting in different assemblies (supercomplex SCI(1)III(2)IV(1) and megacomplex MCI(2)III(2)IV(2)). Found in a complex with TMEM177, COA6, COX18, COX20, SCO1 and SCO2. Interacts with TMEM177 in a COX20-dependent manner. Interacts with COX20. Interacts with COX16. The cofactor is Cu cation.

It localises to the mitochondrion inner membrane. The enzyme catalyses 4 Fe(II)-[cytochrome c] + O2 + 8 H(+)(in) = 4 Fe(III)-[cytochrome c] + 2 H2O + 4 H(+)(out). Component of the cytochrome c oxidase, the last enzyme in the mitochondrial electron transport chain which drives oxidative phosphorylation. The respiratory chain contains 3 multisubunit complexes succinate dehydrogenase (complex II, CII), ubiquinol-cytochrome c oxidoreductase (cytochrome b-c1 complex, complex III, CIII) and cytochrome c oxidase (complex IV, CIV), that cooperate to transfer electrons derived from NADH and succinate to molecular oxygen, creating an electrochemical gradient over the inner membrane that drives transmembrane transport and the ATP synthase. Cytochrome c oxidase is the component of the respiratory chain that catalyzes the reduction of oxygen to water. Electrons originating from reduced cytochrome c in the intermembrane space (IMS) are transferred via the dinuclear copper A center (CU(A)) of subunit 2 and heme A of subunit 1 to the active site in subunit 1, a binuclear center (BNC) formed by heme A3 and copper B (CU(B)). The BNC reduces molecular oxygen to 2 water molecules using 4 electrons from cytochrome c in the IMS and 4 protons from the mitochondrial matrix. The protein is Cytochrome c oxidase subunit 2 (MT-CO2) of Equus asinus (Donkey).